Consider the following 37-residue polypeptide: Non-specific lipid-transfer protein P4 (37 aa).

Belongs to the plant LTP family.

The protein localises to the secreted. In terms of biological role, plant non-specific lipid-transfer proteins transfer phospholipids as well as galactolipids across membranes. May play a role in wax or cutin deposition in the cell walls of expanding epidermal cells and certain secretory tissues. The polypeptide is Non-specific lipid-transfer protein P4 (Vitis sp. (Grape)).